The sequence spans 591 residues: V-type ATP synthase alpha chain (591 aa).

242–249 lines the ATP pocket; it reads GPFGAGKT.

Belongs to the ATPase alpha/beta chains family.

The enzyme catalyses ATP + H2O + 4 H(+)(in) = ADP + phosphate + 5 H(+)(out). In terms of biological role, produces ATP from ADP in the presence of a proton gradient across the membrane. The V-type alpha chain is a catalytic subunit. The polypeptide is V-type ATP synthase alpha chain (atpA) (Chlamydia pneumoniae (Chlamydophila pneumoniae)).